Consider the following 194-residue polypeptide: UPF0301 protein FTH_1193 (194 aa).

The protein belongs to the UPF0301 (AlgH) family.

This is UPF0301 protein FTH_1193 from Francisella tularensis subsp. holarctica (strain OSU18).